The following is a 545-amino-acid chain: Chaperonin GroEL 2 (545 aa).

Residues 29-32 (TLGP), 86-90 (DGTTT), G413, 479-481 (NAA), and D495 each bind ATP.

It belongs to the chaperonin (HSP60) family. Forms a cylinder of 14 subunits composed of two heptameric rings stacked back-to-back. Interacts with the co-chaperonin GroES.

It localises to the cytoplasm. It carries out the reaction ATP + H2O + a folded polypeptide = ADP + phosphate + an unfolded polypeptide.. Its function is as follows. Together with its co-chaperonin GroES, plays an essential role in assisting protein folding. The GroEL-GroES system forms a nano-cage that allows encapsulation of the non-native substrate proteins and provides a physical environment optimized to promote and accelerate protein folding. This chain is Chaperonin GroEL 2, found in Prochlorococcus marinus (strain SARG / CCMP1375 / SS120).